We begin with the raw amino-acid sequence, 190 residues long: Embryo-specific protein ATS3B (190 aa).

The N-terminal stretch at 1–24 (MASVRLFFTLISFVFIISTSVYES) is a signal peptide. N-linked (GlcNAc...) asparagine glycosylation occurs at N37. One can recognise a PLAT domain in the interval 48–158 (CAYTVIISTS…ESVWYGFNYC (111 aa)).

In terms of assembly, interacts with EULS3 (via N-terminus). Expressed in roots, rosette leaves, stems, cauline leaves and flowers.

The protein resides in the secreted. In terms of biological role, may play a role during embryo development. The polypeptide is Embryo-specific protein ATS3B (Arabidopsis thaliana (Mouse-ear cress)).